A 296-amino-acid chain; its full sequence is Circadian clock oscillator protein KaiA (296 aa).

A psR domain, binds oxidized quinones region spans residues 2–133 (ARPGLTIALL…LRQGRADGRS (132 aa)). One can recognise a KaiA N-terminal domain in the interval 2 to 152 (ARPGLTIALL…KLSRRLQERL (151 aa)). The flexible linker stretch occupies residues 153–161 (GYLGVFYKR). Residues 162 to 270 (DPSRFLGSLP…CEMYRRSIPP (109 aa)) form the KaiA C-terminal domain.

As to quaternary structure, homodimer. The KaiABC complex composition changes during the circadian cycle to control KaiC phosphorylation. Complexes KaiC(6), KaiA(2-4):KaiC(6), KaiB(6):KaiC(6) and KaiC(6):KaiB(6):KaiA(12) are among the most important forms, many form cooperatively. KaiA and CikA bind to the same region of the KaiB(fs) form and therefore compete.

In terms of biological role, key component of the KaiABC oscillator complex, which constitutes the main circadian regulator in cyanobacteria. Complex composition changes during the circadian cycle to control KaiC phosphorylation. KaiA stimulates KaiC autophosphorylation, while KaiB sequesters KaiA, leading to KaiC autodephosphorylation. KaiA binding to the KaiC CII domain during the subjective day yields KaiA(2-4):KaiC(6) complexes which stimulate KaiC autophosphorylation. Phospho-Ser-431 KaiC accumulation triggers binding of KaiB during the subjective night to form the KaiB(6):KaiC(6) complex, leading to changes in the output regulators CikA and SasA. KaiB(6):KaiC(6) formation exposes a site for KaiA binding on KaiB that sequesters KaiA from KaiC's CII domain, making the KaiC(6):KaiB(6):KaiA(12) complex resulting in KaiC autodephosphorylation. Complete dephosphorylation of KaiC leads to dissociation of KaiA(2):KaiB(1), completing 1 cycle of the Kai oscillator. Binds oxidized quinones via the N-terminal PsR domain, allowing it to sense redox changes and possibly mediate clock input. The sequence is that of Circadian clock oscillator protein KaiA from Parasynechococcus marenigrum (strain WH8102).